The sequence spans 128 residues: Holo-[acyl-carrier-protein] synthase (128 aa).

Mg(2+)-binding residues include D9 and E56.

It belongs to the P-Pant transferase superfamily. AcpS family. Mg(2+) serves as cofactor.

It is found in the cytoplasm. The catalysed reaction is apo-[ACP] + CoA = holo-[ACP] + adenosine 3',5'-bisphosphate + H(+). In terms of biological role, transfers the 4'-phosphopantetheine moiety from coenzyme A to a Ser of acyl-carrier-protein. The protein is Holo-[acyl-carrier-protein] synthase of Pelagibacter ubique (strain HTCC1062).